The chain runs to 95 residues: Immunogenic miracidial antigen 8C (95 aa).

The span at 1 to 15 shows a compositional bias: polar residues; the sequence is EFTISFSSPVISTGQ. Residues 1–95 are disordered; the sequence is EFTISFSSPV…PKKYGSGHKY (95 aa). Over residues 20–41 the composition is skewed to acidic residues; it reads GDEDYHDGDDDVDYTDDVDDVD. Polar residues predominate over residues 45–59; that stretch reads GSPSQLLQGGYQRNQ.

It belongs to the immunogenic miracidial antigen family.

The chain is Immunogenic miracidial antigen 8C (8C) from Schistosoma japonicum (Blood fluke).